Reading from the N-terminus, the 449-residue chain is Telomere resolvase ResT (449 aa).

It depends on No cofactors were found to be necessary. as a cofactor.

The protein localises to the cytoplasm. The protein resides in the nucleoid. In terms of biological role, catalyzes the conservative, sequence-specific DNA breakage and reunion reaction that generates two hairpin telomeres from a replicated telomere substrate. Breaks two phosphodiester bonds in a single DNA duplex and joins each end with the opposite DNA strand to form covalently closed hairpin telomeres. In vitro relaxed-circular, open-circular and linearized plasmids, but not supercoiled DNA, are all substrates. Cleavage is position-dependent relative to conserved sequence elements. This is Telomere resolvase ResT from Borreliella burgdorferi (strain ATCC 35210 / DSM 4680 / CIP 102532 / B31) (Borrelia burgdorferi).